Reading from the N-terminus, the 873-residue chain is uncharacterized protein (873 aa).

Disordered stretches follow at residues 1-24, 175-251, 375-423, 506-540, 568-592, 662-773, and 822-855; these read MSNKPDANDQCMVKETISRMSMSK, SSAV…TSIS, PSRH…AKKP, DSESASYNTDDANSVVSPSKDGISTTTVSSDATRS, DQSSRYPGRHFGKTGRSHFPRAPEY, ANDS…TSQI, and ANPYSTNNDGNPSNNTSDVEVNETSMNDNSEEPI. Basic and acidic residues predominate over residues 211–225; sequence KDSDRSQTKNTHEET. Positions 376–385 are enriched in basic residues; it reads SRHHSHRKKE. The span at 574–586 shows a compositional bias: basic residues; the sequence is PGRHFGKTGRSHF. Positions 665 to 686 are enriched in low complexity; sequence SPNSSESLESLNNQSYSSSPYS. Over residues 698–740 the composition is skewed to polar residues; sequence QSLNDSPQTSDFKASNLNDSSSNVHSIFQTRETTSPSVQNKTP. Basic and acidic residues predominate over residues 743–755; that stretch reads YHRELKSSKDGHE. The segment covering 758-773 has biased composition (low complexity); that stretch reads SPLVSSSPSGSFTSQI. The segment covering 823–855 has biased composition (polar residues); sequence NPYSTNNDGNPSNNTSDVEVNETSMNDNSEEPI.

Its subcellular location is the cytoplasm. The protein resides in the vacuole membrane. This is an uncharacterized protein from Schizosaccharomyces pombe (strain 972 / ATCC 24843) (Fission yeast).